Here is an 806-residue protein sequence, read N- to C-terminus: Phenylalanine--tRNA ligase beta subunit (806 aa).

The 114-residue stretch at 40-153 folds into the tRNA-binding domain; that stretch reads FNSPDYLQLA…ADAIIIDHVS (114 aa). One can recognise a B5 domain in the interval 413–487; it reads PFSKKLTVNF…KLIDINKLKP (75 aa). Asp465, Asp471, Glu474, and Glu475 together coordinate Mg(2+).

The protein belongs to the phenylalanyl-tRNA synthetase beta subunit family. Type 1 subfamily. Tetramer of two alpha and two beta subunits. Requires Mg(2+) as cofactor.

It localises to the cytoplasm. The catalysed reaction is tRNA(Phe) + L-phenylalanine + ATP = L-phenylalanyl-tRNA(Phe) + AMP + diphosphate + H(+). In Mycoplasma genitalium (strain ATCC 33530 / DSM 19775 / NCTC 10195 / G37) (Mycoplasmoides genitalium), this protein is Phenylalanine--tRNA ligase beta subunit (pheT).